Consider the following 62-residue polypeptide: Large ribosomal subunit protein bL33 (62 aa).

The protein belongs to the bacterial ribosomal protein bL33 family.

The polypeptide is Large ribosomal subunit protein bL33 (Parabacteroides distasonis (strain ATCC 8503 / DSM 20701 / CIP 104284 / JCM 5825 / NCTC 11152)).